We begin with the raw amino-acid sequence, 371 residues long: Ferrochelatase (371 aa).

The Fe cation site is built by His218 and Glu299.

The protein belongs to the ferrochelatase family.

It localises to the cytoplasm. The enzyme catalyses heme b + 2 H(+) = protoporphyrin IX + Fe(2+). It functions in the pathway porphyrin-containing compound metabolism; protoheme biosynthesis; protoheme from protoporphyrin-IX: step 1/1. Its function is as follows. Catalyzes the ferrous insertion into protoporphyrin IX. The sequence is that of Ferrochelatase from Cupriavidus taiwanensis (strain DSM 17343 / BCRC 17206 / CCUG 44338 / CIP 107171 / LMG 19424 / R1) (Ralstonia taiwanensis (strain LMG 19424)).